The chain runs to 118 residues: MLGAYLPILVLVVIAVLFGLGSVIFSSLIGQKKPSTVKLAPYECGCEPVGSARERFSIKFYLIAMLFILFDIEAVFLYPWAVLFKRLGMFGLIEMGVFIVILFVGYVYVWKKGALEWE.

3 helical membrane passes run 5 to 25, 62 to 82, and 87 to 107; these read YLPI…SVIF, LIAM…PWAV, and LGMF…VGYV.

This sequence belongs to the complex I subunit 3 family. In terms of assembly, NDH-1 is composed of 14 different subunits. Subunits NuoA, H, J, K, L, M, N constitute the membrane sector of the complex.

It is found in the cell inner membrane. The enzyme catalyses a quinone + NADH + 5 H(+)(in) = a quinol + NAD(+) + 4 H(+)(out). Its function is as follows. NDH-1 shuttles electrons from NADH, via FMN and iron-sulfur (Fe-S) centers, to quinones in the respiratory chain. The immediate electron acceptor for the enzyme in this species is believed to be ubiquinone. Couples the redox reaction to proton translocation (for every two electrons transferred, four hydrogen ions are translocated across the cytoplasmic membrane), and thus conserves the redox energy in a proton gradient. This chain is NADH-quinone oxidoreductase subunit A 2, found in Citrifermentans bemidjiense (strain ATCC BAA-1014 / DSM 16622 / JCM 12645 / Bem) (Geobacter bemidjiensis).